Reading from the N-terminus, the 345-residue chain is Eukaryotic translation initiation factor 3 subunit F (345 aa).

In terms of domain architecture, MPN spans 30 to 166 (VVIQPQAIFS…TRAYISAPVG (137 aa)). Residues 310-345 (EGASAEAGAQRGQRGGRGGRGGQQRTQERASEEVRA) are disordered. Residues 312-321 (ASAEAGAQRG) show a composition bias toward low complexity. The segment covering 322–331 (QRGGRGGRGG) has biased composition (gly residues). Basic and acidic residues predominate over residues 335–345 (TQERASEEVRA).

Belongs to the eIF-3 subunit F family. As to quaternary structure, component of the eukaryotic translation initiation factor 3 (eIF-3) complex.

Its subcellular location is the cytoplasm. Component of the eukaryotic translation initiation factor 3 (eIF-3) complex, which is involved in protein synthesis of a specialized repertoire of mRNAs and, together with other initiation factors, stimulates binding of mRNA and methionyl-tRNAi to the 40S ribosome. The eIF-3 complex specifically targets and initiates translation of a subset of mRNAs involved in cell proliferation. The chain is Eukaryotic translation initiation factor 3 subunit F from Neosartorya fischeri (strain ATCC 1020 / DSM 3700 / CBS 544.65 / FGSC A1164 / JCM 1740 / NRRL 181 / WB 181) (Aspergillus fischerianus).